The sequence spans 116 residues: Putative RNase MJ0125 (116 aa).

Active-site residues include arginine 76 and histidine 81. Positions 76–83 (RDKLIHQY) match the RX(4)HXY motif motif. Residue tyrosine 83 is modified to O-di-AMP-tyrosine.

Belongs to the HepT RNase toxin family. As to quaternary structure, homodimer, probably forms a complex with cognate antitoxin MJ0126. Modified by cognate antitoxin MJ0126; probably at least 2 successive AMPylation events occur on Tyr-83.

Functionally, probable toxic component of a putative type VII toxin-antitoxin (TA) system, probably an RNase. Probably neutralized by cognate antitoxin MJ0126. Neutralization may be due to AMPylation by MJ0126. The sequence is that of Putative RNase MJ0125 from Methanocaldococcus jannaschii (strain ATCC 43067 / DSM 2661 / JAL-1 / JCM 10045 / NBRC 100440) (Methanococcus jannaschii).